Reading from the N-terminus, the 1171-residue chain is ATP-dependent helicase/deoxyribonuclease subunit B (1171 aa).

The UvrD-like helicase ATP-binding domain maps to 1 to 343 (MSLRFVIGRA…LVAEENYRYR (343 aa)). ATP is bound at residue 8–15 (GRAGSGKS). The region spanning 281–587 (MEQPRFHSPA…QFANIPPSLD (307 aa)) is the UvrD-like helicase C-terminal domain. [4Fe-4S] cluster is bound by residues Cys805, Cys1129, Cys1132, and Cys1138.

The protein belongs to the helicase family. AddB/RexB type 1 subfamily. As to quaternary structure, heterodimer of AddA and AddB. It depends on Mg(2+) as a cofactor. [4Fe-4S] cluster is required as a cofactor.

In terms of biological role, the heterodimer acts as both an ATP-dependent DNA helicase and an ATP-dependent, dual-direction single-stranded exonuclease. Recognizes the chi site generating a DNA molecule suitable for the initiation of homologous recombination. The AddB subunit has 5' -&gt; 3' nuclease activity but not helicase activity. The chain is ATP-dependent helicase/deoxyribonuclease subunit B from Bacillus thuringiensis subsp. konkukian (strain 97-27).